Consider the following 244-residue polypeptide: Ubiquinone/menaquinone biosynthesis C-methyltransferase UbiE (244 aa).

Residues T70, D91, and 117-118 (DA) each bind S-adenosyl-L-methionine.

The protein belongs to the class I-like SAM-binding methyltransferase superfamily. MenG/UbiE family.

The catalysed reaction is a 2-demethylmenaquinol + S-adenosyl-L-methionine = a menaquinol + S-adenosyl-L-homocysteine + H(+). It catalyses the reaction a 2-methoxy-6-(all-trans-polyprenyl)benzene-1,4-diol + S-adenosyl-L-methionine = a 5-methoxy-2-methyl-3-(all-trans-polyprenyl)benzene-1,4-diol + S-adenosyl-L-homocysteine + H(+). Its pathway is quinol/quinone metabolism; menaquinone biosynthesis; menaquinol from 1,4-dihydroxy-2-naphthoate: step 2/2. It participates in cofactor biosynthesis; ubiquinone biosynthesis. Functionally, methyltransferase required for the conversion of demethylmenaquinol (DMKH2) to menaquinol (MKH2) and the conversion of 2-polyprenyl-6-methoxy-1,4-benzoquinol (DDMQH2) to 2-polyprenyl-3-methyl-6-methoxy-1,4-benzoquinol (DMQH2). The sequence is that of Ubiquinone/menaquinone biosynthesis C-methyltransferase UbiE from Chromobacterium violaceum (strain ATCC 12472 / DSM 30191 / JCM 1249 / CCUG 213 / NBRC 12614 / NCIMB 9131 / NCTC 9757 / MK).